The chain runs to 118 residues: Small ribosomal subunit protein uS13 (118 aa).

Residues 94-118 are disordered; the sequence is SLPLRGQRTKTNARTRKGPRKPIKK.

Belongs to the universal ribosomal protein uS13 family. Part of the 30S ribosomal subunit. Forms a loose heterodimer with protein S19. Forms two bridges to the 50S subunit in the 70S ribosome.

Functionally, located at the top of the head of the 30S subunit, it contacts several helices of the 16S rRNA. In the 70S ribosome it contacts the 23S rRNA (bridge B1a) and protein L5 of the 50S subunit (bridge B1b), connecting the 2 subunits; these bridges are implicated in subunit movement. Contacts the tRNAs in the A and P-sites. In Vibrio cholerae serotype O1 (strain ATCC 39315 / El Tor Inaba N16961), this protein is Small ribosomal subunit protein uS13.